The primary structure comprises 240 residues: Uridylate kinase (240 aa).

Residue 13-16 (KFSG) coordinates ATP. Residue Gly55 coordinates UMP. Residues Gly56 and Arg60 each contribute to the ATP site. UMP contacts are provided by residues Asp76 and 137–144 (TGNPFFTT). Thr164, Tyr170, and Asp173 together coordinate ATP.

It belongs to the UMP kinase family. Homohexamer.

The protein localises to the cytoplasm. The enzyme catalyses UMP + ATP = UDP + ADP. It functions in the pathway pyrimidine metabolism; CTP biosynthesis via de novo pathway; UDP from UMP (UMPK route): step 1/1. Inhibited by UTP. Functionally, catalyzes the reversible phosphorylation of UMP to UDP. The sequence is that of Uridylate kinase from Helicobacter pylori (strain J99 / ATCC 700824) (Campylobacter pylori J99).